We begin with the raw amino-acid sequence, 366 residues long: Bacteriochlorophyll a protein (366 aa).

Bacteriochlorophyll a-binding residues include His111, His146, His290, His297, and His298.

In terms of assembly, homotrimer. Each subunit contains 7 molecules of bacteriochlorophyll a.

Functionally, intermediary in the transfer of excitation energy from the chlorophyll to the reaction centers. This Chlorobaculum tepidum (strain ATCC 49652 / DSM 12025 / NBRC 103806 / TLS) (Chlorobium tepidum) protein is Bacteriochlorophyll a protein (fmoA).